Reading from the N-terminus, the 405-residue chain is Tryptophan synthase beta chain (405 aa).

Position 98 is an N6-(pyridoxal phosphate)lysine (Lys-98).

It belongs to the TrpB family. Tetramer of two alpha and two beta chains. Requires pyridoxal 5'-phosphate as cofactor.

It catalyses the reaction (1S,2R)-1-C-(indol-3-yl)glycerol 3-phosphate + L-serine = D-glyceraldehyde 3-phosphate + L-tryptophan + H2O. It functions in the pathway amino-acid biosynthesis; L-tryptophan biosynthesis; L-tryptophan from chorismate: step 5/5. The beta subunit is responsible for the synthesis of L-tryptophan from indole and L-serine. The polypeptide is Tryptophan synthase beta chain (Parvibaculum lavamentivorans (strain DS-1 / DSM 13023 / NCIMB 13966)).